The primary structure comprises 153 residues: Neuromedin-S (153 aa).

The N-terminal stretch at 1-26 (MKHLRPQFPLILAIYCFCMLQIPSSG) is a signal peptide. 3 propeptides span residues 27–69 (FPQP…IYKR), 70–105 (FLFH…ANRR), and 106–108 (MKR). Residue N141 is modified to Asparagine amide. Residues 144-153 (NIEDEAQIQW) constitute a propeptide that is removed on maturation.

This sequence belongs to the NmU family.

The protein resides in the secreted. Functionally, implicated in the regulation of circadian rhythms through autocrine and/or paracrine actions. This chain is Neuromedin-S (NMS), found in Homo sapiens (Human).